Here is a 713-residue protein sequence, read N- to C-terminus: Cyclomaltodextrin glucanotransferase (713 aa).

The N-terminal stretch at 1-27 (MKKFLKSTAALALGLSLTFGLFSPAQA) is a signal peptide. An A1 region spans residues 28–165 (APDTSVSNKQ…NIKVIIDFAP (138 aa)). Ca(2+) contacts are provided by aspartate 54, asparagine 56, asparagine 59, and asparagine 60. Cysteine 70 and cysteine 77 form a disulfide bridge. Ca(2+) is bound by residues glycine 78 and aspartate 80. 127–128 (YW) contacts substrate. Asparagine 166 provides a ligand contact to Ca(2+). Residues 166–229 (NHTSPASSDQ…NLYDLADLNH (64 aa)) are b. Residues histidine 167 and 172–174 (SSD) each bind substrate. Isoleucine 217 is a binding site for Ca(2+). 220 to 223 (NLYD) provides a ligand contact to substrate. Aspartate 226 lines the Ca(2+) pocket. The interval 230 to 433 (NNSTVDVYLK…LRKCNPAIAY (204 aa)) is A2. Residue arginine 254 participates in substrate binding. The active-site Nucleophile is the aspartate 256. 259–260 (KH) lines the substrate pocket. Histidine 260 provides a ligand contact to Ca(2+). The active-site Proton donor is glutamate 284. Alanine 342 provides a ligand contact to Ca(2+). The substrate site is built by histidine 354, aspartate 398, and arginine 402. Residues 434 to 522 (GSTQERWINN…GTAVWQYTAA (89 aa)) form a c region. The tract at residues 523 to 609 (TATPTIGHVG…SNVYDNFEVL (87 aa)) is d. The 82-residue stretch at 526–607 (PTIGHVGPMM…TASNVYDNFE (82 aa)) folds into the IPT/TIG domain. Aspartate 604 contributes to the Ca(2+) binding site. In terms of domain architecture, CBM20 spans 608–713 (VLSGDQVSVR…TATINVNWQP (106 aa)). Residues 610 to 713 (SGDQVSVRFV…TATINVNWQP (104 aa)) form an e region.

This sequence belongs to the glycosyl hydrolase 13 family. As to quaternary structure, monomer. Ca(2+) serves as cofactor.

Its subcellular location is the secreted. The enzyme catalyses Cyclizes part of a (1-&gt;4)-alpha-D-glucan chain by formation of a (1-&gt;4)-alpha-D-glucosidic bond.. In Niallia circulans (Bacillus circulans), this protein is Cyclomaltodextrin glucanotransferase (cgt).